The primary structure comprises 60 residues: Ixodegrin-like peptide (60 aa).

A signal peptide spans 1-19 (MNAVFIAALLILGTSTFDA). Residues 49–51 (RGD) carry the Cell attachment site motif.

This sequence belongs to the ixodegrin family. In terms of processing, contains 3 disulfide bonds. In terms of tissue distribution, expressed in salivary glands.

The protein localises to the secreted. In terms of biological role, tick salivary platelet aggregation inhibitor that plays an important part in the anti-hemostatic strategy of ticks. Inhibits platelet aggregation induced by ADP, thrombin and thromboxane A2 (TXA2). Blocks platelet adhesion to soluble collagen (most probably through the binding to alpha-2/beta-1 integrin (ITGA2/ITGB1)) and binds to purified glycoprotein IIb/IIIa (ITGA2B/ITGB3) in a dose-dependent manner. In vivo, reduces thrombus weight effectively in a rat arteriovenous shunt model and inhibits thrombosis in a carrageenan-induced mouse tail thrombosis model. This chain is Ixodegrin-like peptide, found in Ixodes scapularis (Black-legged tick).